A 71-amino-acid chain; its full sequence is Large ribosomal subunit protein bL31 (71 aa).

4 residues coordinate Zn(2+): Cys16, Cys18, Cys38, and Cys41.

It belongs to the bacterial ribosomal protein bL31 family. Type A subfamily. As to quaternary structure, part of the 50S ribosomal subunit. Zn(2+) is required as a cofactor.

Its function is as follows. Binds the 23S rRNA. The protein is Large ribosomal subunit protein bL31 of Francisella tularensis subsp. novicida (strain U112).